Consider the following 272-residue polypeptide: tRNA (guanine-N(7)-)-methyltransferase (272 aa).

Over residues 1–20 the composition is skewed to basic and acidic residues; sequence MSTDSESKRRAYREEKEGAR. The tract at residues 1–43 is disordered; the sequence is MSTDSESKRRAYREEKEGARKKSVKLAPEATPESKPDLPRKRY. Residues Gly89, 112–113, 148–149, and Cys168 each bind S-adenosyl-L-methionine; these read EI and NA. Residue Asp171 is part of the active site. 246–248 provides a ligand contact to S-adenosyl-L-methionine; sequence TEE.

Belongs to the class I-like SAM-binding methyltransferase superfamily. TrmB family. In terms of assembly, forms a complex with TRM82.

It localises to the nucleus. It carries out the reaction guanosine(46) in tRNA + S-adenosyl-L-methionine = N(7)-methylguanosine(46) in tRNA + S-adenosyl-L-homocysteine. It functions in the pathway tRNA modification; N(7)-methylguanine-tRNA biosynthesis. Functionally, catalyzes the formation of N(7)-methylguanine at position 46 (m7G46) in tRNA. This Meyerozyma guilliermondii (strain ATCC 6260 / CBS 566 / DSM 6381 / JCM 1539 / NBRC 10279 / NRRL Y-324) (Yeast) protein is tRNA (guanine-N(7)-)-methyltransferase.